Reading from the N-terminus, the 239-residue chain is UDP-2,3-diacylglucosamine hydrolase (239 aa).

D8, H10, D41, N78, and H113 together coordinate Mn(2+). Position 78–79 (78–79 (NR)) interacts with substrate. Substrate is bound by residues D121, S159, N163, K166, and H194. 2 residues coordinate Mn(2+): H194 and H196.

The protein belongs to the LpxH family. Mn(2+) serves as cofactor.

Its subcellular location is the cell inner membrane. It carries out the reaction UDP-2-N,3-O-bis[(3R)-3-hydroxytetradecanoyl]-alpha-D-glucosamine + H2O = 2-N,3-O-bis[(3R)-3-hydroxytetradecanoyl]-alpha-D-glucosaminyl 1-phosphate + UMP + 2 H(+). The protein operates within glycolipid biosynthesis; lipid IV(A) biosynthesis; lipid IV(A) from (3R)-3-hydroxytetradecanoyl-[acyl-carrier-protein] and UDP-N-acetyl-alpha-D-glucosamine: step 4/6. Functionally, hydrolyzes the pyrophosphate bond of UDP-2,3-diacylglucosamine to yield 2,3-diacylglucosamine 1-phosphate (lipid X) and UMP by catalyzing the attack of water at the alpha-P atom. Involved in the biosynthesis of lipid A, a phosphorylated glycolipid that anchors the lipopolysaccharide to the outer membrane of the cell. The sequence is that of UDP-2,3-diacylglucosamine hydrolase from Shewanella oneidensis (strain ATCC 700550 / JCM 31522 / CIP 106686 / LMG 19005 / NCIMB 14063 / MR-1).